Reading from the N-terminus, the 457-residue chain is Mannose-6-phosphate isomerase (457 aa).

Glutamine 108, histidine 110, glutamate 135, and histidine 292 together coordinate Zn(2+). The active site involves arginine 311.

The protein belongs to the mannose-6-phosphate isomerase type 1 family. Requires Zn(2+) as cofactor.

The protein localises to the cytoplasm. The enzyme catalyses D-mannose 6-phosphate = D-fructose 6-phosphate. The protein operates within nucleotide-sugar biosynthesis; GDP-alpha-D-mannose biosynthesis; alpha-D-mannose 1-phosphate from D-fructose 6-phosphate: step 1/2. Its function is as follows. Involved in the synthesis of the GDP-mannose and dolichol-phosphate-mannose required for a number of critical mannosyl transfer reactions. This is Mannose-6-phosphate isomerase (pmi1) from Aspergillus fumigatus (strain ATCC MYA-4609 / CBS 101355 / FGSC A1100 / Af293) (Neosartorya fumigata).